Reading from the N-terminus, the 70-residue chain is Large ribosomal subunit protein eL38 (70 aa).

The protein belongs to the eukaryotic ribosomal protein eL38 family.

This is Large ribosomal subunit protein eL38 (RpL38) from Bombyx mori (Silk moth).